A 273-amino-acid polypeptide reads, in one-letter code: Shikimate dehydrogenase (NADP(+)) (273 aa).

Shikimate is bound by residues 14 to 16 (SKS) and threonine 61. Residue lysine 65 is the Proton acceptor of the active site. Shikimate-binding residues include asparagine 86 and aspartate 102. NADP(+) contacts are provided by residues 126-130 (GAGGA), 150-155 (NRTVAK), and methionine 213. Residue tyrosine 215 participates in shikimate binding. Position 237 (glycine 237) interacts with NADP(+).

Belongs to the shikimate dehydrogenase family. Homodimer.

The enzyme catalyses shikimate + NADP(+) = 3-dehydroshikimate + NADPH + H(+). It functions in the pathway metabolic intermediate biosynthesis; chorismate biosynthesis; chorismate from D-erythrose 4-phosphate and phosphoenolpyruvate: step 4/7. Involved in the biosynthesis of the chorismate, which leads to the biosynthesis of aromatic amino acids. Catalyzes the reversible NADPH linked reduction of 3-dehydroshikimate (DHSA) to yield shikimate (SA). The sequence is that of Shikimate dehydrogenase (NADP(+)) from Tolumonas auensis (strain DSM 9187 / NBRC 110442 / TA 4).